The primary structure comprises 828 residues: Translation initiation factor IF-2 (828 aa).

2 disordered regions span residues 48 to 76 and 112 to 137; these read SYSGSTTTLSLNKEKGSLETGSSSGSEEF and ASQEDPIEVEQEESSDTNKVKEEPKI. Positions 49-58 are enriched in polar residues; it reads YSGSTTTLSL. Residues 65–74 are compositionally biased toward low complexity; that stretch reads LETGSSSGSE. Over residues 116–126 the composition is skewed to acidic residues; the sequence is DPIEVEQEESS. Positions 127 to 137 are enriched in basic and acidic residues; the sequence is DTNKVKEEPKI. The tr-type G domain occupies 326–496; the sequence is SRAPVVTVMG…LLIAEMQNLK (171 aa). Residues 335–342 form a G1 region; the sequence is GHVDHGKT. Residue 335 to 342 coordinates GTP; the sequence is GHVDHGKT. Positions 360-364 are G2; the sequence is GITQH. Residues 382–385 are G3; that stretch reads DTPG. Residues 382 to 386 and 436 to 439 contribute to the GTP site; these read DTPGH and NKID. Residues 436 to 439 form a G4 region; it reads NKID. Positions 472–474 are G5; it reads SAL.

This sequence belongs to the TRAFAC class translation factor GTPase superfamily. Classic translation factor GTPase family. IF-2 subfamily.

The protein localises to the cytoplasm. Functionally, one of the essential components for the initiation of protein synthesis. Protects formylmethionyl-tRNA from spontaneous hydrolysis and promotes its binding to the 30S ribosomal subunits. Also involved in the hydrolysis of GTP during the formation of the 70S ribosomal complex. In Rickettsia bellii (strain RML369-C), this protein is Translation initiation factor IF-2.